The sequence spans 321 residues: Glucokinase (321 aa).

Residue 8-13 (GDVGGT) participates in ATP binding.

It belongs to the bacterial glucokinase family.

It is found in the cytoplasm. The catalysed reaction is D-glucose + ATP = D-glucose 6-phosphate + ADP + H(+). The protein is Glucokinase of Klebsiella pneumoniae (strain 342).